The primary structure comprises 560 residues: DNA ligase B (560 aa).

Residue K124 is the N6-AMP-lysine intermediate of the active site.

The protein belongs to the NAD-dependent DNA ligase family. LigB subfamily.

It catalyses the reaction NAD(+) + (deoxyribonucleotide)n-3'-hydroxyl + 5'-phospho-(deoxyribonucleotide)m = (deoxyribonucleotide)n+m + AMP + beta-nicotinamide D-nucleotide.. Its function is as follows. Catalyzes the formation of phosphodiester linkages between 5'-phosphoryl and 3'-hydroxyl groups in double-stranded DNA using NAD as a coenzyme and as the energy source for the reaction. This Escherichia coli O6:H1 (strain CFT073 / ATCC 700928 / UPEC) protein is DNA ligase B.